The chain runs to 355 residues: NADH dehydrogenase [ubiquinone] 1 alpha subcomplex subunit 10, mitochondrial (355 aa).

A mitochondrion-targeting transit peptide spans 1–35 (MALRLLRLVPASAPARGLAAGAQRVGRIHTSVHCK). Position 122 is an N6-acetyllysine; alternate (Lys122). Lys122 carries the post-translational modification N6-succinyllysine; alternate. At Ser250 the chain carries Phosphoserine; by PINK1. N6-succinyllysine is present on Lys285.

Belongs to the complex I NDUFA10 subunit family. In terms of assembly, complex I is composed of 45 different subunits. This a component of the hydrophobic protein fraction. It depends on FAD as a cofactor. Phosphorylation at Ser-250 by PINK1 is required for the binding and/or reduction of the complex I substrate ubiquinone. In terms of processing, acetylation of Lys-242 is observed in liver mitochondria from fasted mice but not from fed mice.

It localises to the mitochondrion matrix. Functionally, accessory subunit of the mitochondrial membrane respiratory chain NADH dehydrogenase (Complex I), that is believed not to be involved in catalysis. Complex I functions in the transfer of electrons from NADH to the respiratory chain. The immediate electron acceptor for the enzyme is believed to be ubiquinone. In Mus musculus (Mouse), this protein is NADH dehydrogenase [ubiquinone] 1 alpha subcomplex subunit 10, mitochondrial (Ndufa10).